A 589-amino-acid chain; its full sequence is Aspartate--tRNA(Asp/Asn) ligase (589 aa).

Residue Glu175 participates in L-aspartate binding. The tract at residues Gln199 to Lys202 is aspartate. Arg221 provides a ligand contact to L-aspartate. ATP-binding positions include Arg221–Glu223 and Gln230. Residue His451 coordinates L-aspartate. Glu485 contributes to the ATP binding site. Arg492 provides a ligand contact to L-aspartate. Gly537 to Arg540 provides a ligand contact to ATP.

It belongs to the class-II aminoacyl-tRNA synthetase family. Type 1 subfamily. Homodimer.

The protein resides in the cytoplasm. The catalysed reaction is tRNA(Asx) + L-aspartate + ATP = L-aspartyl-tRNA(Asx) + AMP + diphosphate. In terms of biological role, aspartyl-tRNA synthetase with relaxed tRNA specificity since it is able to aspartylate not only its cognate tRNA(Asp) but also tRNA(Asn). Reaction proceeds in two steps: L-aspartate is first activated by ATP to form Asp-AMP and then transferred to the acceptor end of tRNA(Asp/Asn). The polypeptide is Aspartate--tRNA(Asp/Asn) ligase (Roseiflexus sp. (strain RS-1)).